A 383-amino-acid chain; its full sequence is RNA-binding motif, single-stranded-interacting protein 2 (383 aa).

The residue at position 1 (methionine 1) is an N-acetylmethionine. Residues 28–56 (QMAPPSPRNSTPNSSGGGGGGSGGNDQLS) form a disordered region. Gly residues predominate over residues 42-51 (SGGGGGGSGG). 2 RRM domains span residues 58 to 131 (TNLY…MAKQ) and 137 to 222 (TNLY…FADG). Phosphoserine is present on serine 108. Serine 287 carries the post-translational modification Phosphoserine. Positions 352 to 383 (SSVSAEESNGQQNQLAVEPPSDHGVYPFQFSK) are disordered.

It is found in the nucleus. The sequence is that of RNA-binding motif, single-stranded-interacting protein 2 (Rbms2) from Mus musculus (Mouse).